Reading from the N-terminus, the 375-residue chain is Protein NDRG3 (375 aa).

Residues 326–375 (RSRTHSASSSGSMEIPRSRSHTSNAQLKSSSNNSLSNQIQETPQTIELSC) are disordered. Over residues 348-363 (SNAQLKSSSNNSLSNQ) the composition is skewed to low complexity. Polar residues predominate over residues 364 to 375 (IQETPQTIELSC).

This sequence belongs to the NDRG family.

This Xenopus laevis (African clawed frog) protein is Protein NDRG3.